We begin with the raw amino-acid sequence, 430 residues long: Histidine--tRNA ligase (430 aa).

Belongs to the class-II aminoacyl-tRNA synthetase family. Homodimer.

The protein resides in the cytoplasm. It carries out the reaction tRNA(His) + L-histidine + ATP = L-histidyl-tRNA(His) + AMP + diphosphate + H(+). The chain is Histidine--tRNA ligase from Chlamydia abortus (strain DSM 27085 / S26/3) (Chlamydophila abortus).